The chain runs to 233 residues: 2-C-methyl-D-erythritol 4-phosphate cytidylyltransferase (233 aa).

This sequence belongs to the IspD/TarI cytidylyltransferase family. IspD subfamily.

It catalyses the reaction 2-C-methyl-D-erythritol 4-phosphate + CTP + H(+) = 4-CDP-2-C-methyl-D-erythritol + diphosphate. It participates in isoprenoid biosynthesis; isopentenyl diphosphate biosynthesis via DXP pathway; isopentenyl diphosphate from 1-deoxy-D-xylulose 5-phosphate: step 2/6. Functionally, catalyzes the formation of 4-diphosphocytidyl-2-C-methyl-D-erythritol from CTP and 2-C-methyl-D-erythritol 4-phosphate (MEP). This chain is 2-C-methyl-D-erythritol 4-phosphate cytidylyltransferase, found in Syntrophotalea carbinolica (strain DSM 2380 / NBRC 103641 / GraBd1) (Pelobacter carbinolicus).